The following is a 430-amino-acid chain: mRNA cap guanine-N(7) methyltransferase (430 aa).

The disordered stretch occupies residues 1-88; sequence MALRPEKPVW…YDLEERKKKQ (88 aa). Positions 15–37 are enriched in basic and acidic residues; sequence QYDRQYGKLEEPKPPREESKPGD. The mRNA cap 0 methyltransferase domain maps to 136 to 419; that stretch reads SPIIKLRNFN…FYTVFAFRKV (284 aa). 145–146 contacts mRNA; it reads NN. Positions 149, 167, 189, 218, 244, and 249 each coordinate S-adenosyl-L-methionine.

This sequence belongs to the class I-like SAM-binding methyltransferase superfamily. mRNA cap 0 methyltransferase family.

It localises to the nucleus. The enzyme catalyses a 5'-end (5'-triphosphoguanosine)-ribonucleoside in mRNA + S-adenosyl-L-methionine = a 5'-end (N(7)-methyl 5'-triphosphoguanosine)-ribonucleoside in mRNA + S-adenosyl-L-homocysteine. Responsible for methylating the 5'-cap structure of mRNAs. The polypeptide is mRNA cap guanine-N(7) methyltransferase (ABD1) (Eremothecium gossypii (strain ATCC 10895 / CBS 109.51 / FGSC 9923 / NRRL Y-1056) (Yeast)).